We begin with the raw amino-acid sequence, 208 residues long: Large ribosomal subunit protein uL4 (208 aa).

The tract at residues 54–78 (RAEVSHTTKKPWNQKGTGRARAGMS) is disordered.

It belongs to the universal ribosomal protein uL4 family. As to quaternary structure, part of the 50S ribosomal subunit.

One of the primary rRNA binding proteins, this protein initially binds near the 5'-end of the 23S rRNA. It is important during the early stages of 50S assembly. It makes multiple contacts with different domains of the 23S rRNA in the assembled 50S subunit and ribosome. In terms of biological role, forms part of the polypeptide exit tunnel. The polypeptide is Large ribosomal subunit protein uL4 (Methylobacillus flagellatus (strain ATCC 51484 / DSM 6875 / VKM B-1610 / KT)).